Here is a 239-residue protein sequence, read N- to C-terminus: Serine protease SplF (239 aa).

A signal peptide spans 1 to 36 (MNKNIIIKSIAALTILTSVTGVGTTMVEGIQQTAKA). Residues H75, D114, and S192 each act as charge relay system in the active site.

This sequence belongs to the peptidase S1B family.

It localises to the secreted. The sequence is that of Serine protease SplF (splF) from Staphylococcus aureus (strain Mu50 / ATCC 700699).